A 1579-amino-acid polypeptide reads, in one-letter code: Pentafunctional AROM polypeptide (1579 aa).

The 3-dehydroquinate synthase stretch occupies residues 1–383; sequence MLVKVPILGR…YGKSAHVVSD (383 aa). NAD(+)-binding positions include 40-42, 75-78, 106-108, and D111; these read DSN, EANK, and GGI. Residue R122 participates in 7-phospho-2-dehydro-3-deoxy-D-arabino-heptonate binding. 131–132 serves as a coordination point for NAD(+); the sequence is TS. 7-phospho-2-dehydro-3-deoxy-D-arabino-heptonate contacts are provided by D138 and K144. NAD(+) is bound at residue K153. N154 is a 7-phospho-2-dehydro-3-deoxy-D-arabino-heptonate binding site. NAD(+) contacts are provided by residues 171 to 174 and N182; that span reads WLQS. E186 lines the Zn(2+) pocket. Residues 186 to 189 and K249 each bind 7-phospho-2-dehydro-3-deoxy-D-arabino-heptonate; that span reads EVIK. E259 (proton acceptor; for 3-dehydroquinate synthase activity) is an active-site residue. 7-phospho-2-dehydro-3-deoxy-D-arabino-heptonate contacts are provided by residues 263–267 and H270; that span reads RNLLN. H270 provides a ligand contact to Zn(2+). The active-site Proton acceptor; for 3-dehydroquinate synthase activity is H274. The 7-phospho-2-dehydro-3-deoxy-D-arabino-heptonate site is built by H286 and K355. Residue H286 participates in Zn(2+) binding. Residues 396–862 are EPSP synthase; sequence VYPFNNIPRD…WDVLHTELGA (467 aa). The For EPSP synthase activity role is filled by C844. A shikimate kinase region spans residues 881-1071; the sequence is SVVIIGMRAA…IPTRRSAFVC (191 aa). 886–893 is a binding site for ATP; the sequence is GMRAAGKT. The interval 1072–1284 is 3-dehydroquinase; that stretch reads LTFENLTEYT…AAPGQLTVAE (213 aa). The active-site Proton acceptor; for 3-dehydroquinate dehydratase activity is H1189. Residue K1218 is the Schiff-base intermediate with substrate; for 3-dehydroquinate dehydratase activity of the active site. The segment at 1297–1579 is shikimate dehydrogenase; it reads KKDFFVVGSP…KAIYDAVTEI (283 aa).

The protein in the N-terminal section; belongs to the sugar phosphate cyclases superfamily. Dehydroquinate synthase family. In the 2nd section; belongs to the EPSP synthase family. It in the 3rd section; belongs to the shikimate kinase family. This sequence in the 4th section; belongs to the type-I 3-dehydroquinase family. The protein in the C-terminal section; belongs to the shikimate dehydrogenase family. In terms of assembly, homodimer. Requires Zn(2+) as cofactor.

The protein localises to the cytoplasm. The catalysed reaction is 7-phospho-2-dehydro-3-deoxy-D-arabino-heptonate = 3-dehydroquinate + phosphate. The enzyme catalyses 3-dehydroquinate = 3-dehydroshikimate + H2O. It catalyses the reaction shikimate + NADP(+) = 3-dehydroshikimate + NADPH + H(+). It carries out the reaction shikimate + ATP = 3-phosphoshikimate + ADP + H(+). The catalysed reaction is 3-phosphoshikimate + phosphoenolpyruvate = 5-O-(1-carboxyvinyl)-3-phosphoshikimate + phosphate. It participates in metabolic intermediate biosynthesis; chorismate biosynthesis; chorismate from D-erythrose 4-phosphate and phosphoenolpyruvate: step 2/7. Its pathway is metabolic intermediate biosynthesis; chorismate biosynthesis; chorismate from D-erythrose 4-phosphate and phosphoenolpyruvate: step 3/7. The protein operates within metabolic intermediate biosynthesis; chorismate biosynthesis; chorismate from D-erythrose 4-phosphate and phosphoenolpyruvate: step 4/7. It functions in the pathway metabolic intermediate biosynthesis; chorismate biosynthesis; chorismate from D-erythrose 4-phosphate and phosphoenolpyruvate: step 5/7. It participates in metabolic intermediate biosynthesis; chorismate biosynthesis; chorismate from D-erythrose 4-phosphate and phosphoenolpyruvate: step 6/7. Its function is as follows. The AROM polypeptide catalyzes 5 consecutive enzymatic reactions in prechorismate polyaromatic amino acid biosynthesis. This chain is Pentafunctional AROM polypeptide, found in Candida glabrata (strain ATCC 2001 / BCRC 20586 / JCM 3761 / NBRC 0622 / NRRL Y-65 / CBS 138) (Yeast).